A 142-amino-acid chain; its full sequence is Nucleoside diphosphate kinase (142 aa).

ATP-binding residues include K9, F57, R85, T91, R102, and N112. H115 functions as the Pros-phosphohistidine intermediate in the catalytic mechanism.

It belongs to the NDK family. In terms of assembly, homotetramer. Mg(2+) serves as cofactor.

Its subcellular location is the cytoplasm. The catalysed reaction is a 2'-deoxyribonucleoside 5'-diphosphate + ATP = a 2'-deoxyribonucleoside 5'-triphosphate + ADP. It catalyses the reaction a ribonucleoside 5'-diphosphate + ATP = a ribonucleoside 5'-triphosphate + ADP. Its function is as follows. Major role in the synthesis of nucleoside triphosphates other than ATP. The ATP gamma phosphate is transferred to the NDP beta phosphate via a ping-pong mechanism, using a phosphorylated active-site intermediate. This chain is Nucleoside diphosphate kinase, found in Dehalococcoides mccartyi (strain CBDB1).